Here is a 137-residue protein sequence, read N- to C-terminus: Large ribosomal subunit protein uL16 (137 aa).

This sequence belongs to the universal ribosomal protein uL16 family. As to quaternary structure, part of the 50S ribosomal subunit.

Functionally, binds 23S rRNA and is also seen to make contacts with the A and possibly P site tRNAs. The protein is Large ribosomal subunit protein uL16 of Coxiella burnetii (strain RSA 331 / Henzerling II).